The following is a 355-amino-acid chain: uncharacterized protein (355 aa).

The protein resides in the cytoplasm. This is an uncharacterized protein from Saccharomyces cerevisiae (strain ATCC 204508 / S288c) (Baker's yeast).